The following is a 326-amino-acid chain: Protein FAM50 homolog (326 aa).

Residues 76 to 112 (EISNRDLQVARGASSSTSLAKDSQEAREKEEHVAKHT) form a disordered region. Residues 97 to 109 (DSQEAREKEEHVA) show a composition bias toward basic and acidic residues.

It belongs to the FAM50 family.

The protein is Protein FAM50 homolog of Caenorhabditis briggsae.